The following is a 1720-amino-acid chain: 6-methylcalicylic acide synthase (1720 aa).

Positions 1–31 (MDKQSASGEIPAMRWEPYHRRDPRNAKELSK) are disordered. The Ketosynthase family 3 (KS3) domain occupies 1 to 399 (MDKQSASGEI…GTVSHAVIEQ (399 aa)). A compositionally biased stretch (basic and acidic residues) spans 16–30 (EPYHRRDPRNAKELS). Catalysis depends on for beta-ketoacyl synthase activity residues C146, H281, and H321. Residues 509–823 (VWVFSGHGAQ…IAQLHCRGAE (315 aa)) form a malonyl-CoA:ACP transacylase (MAT) domain region. The interval 868 to 987 (HTLLGQRIGI…AYWARDIQEA (120 aa)) is N-terminal hotdog fold. The segment at 868–1139 (HTLLGQRIGI…FTAMRFSEIE (272 aa)) is dehydratase (DH) domain. Positions 868-1144 (HTLLGQRIGI…FSEIEGTPGV (277 aa)) constitute a PKS/mFAS DH domain. H900 serves as the catalytic Proton acceptor; for dehydratase activity. Residues 1001-1144 (GTRIRDDFSI…FSEIEGTPGV (144 aa)) form a C-terminal hotdog fold region. The active-site Proton donor; for dehydratase activity is the D1065. Residues 1148–1545 (MESLVHQLAW…AVAVQWTSWR (398 aa)) are product template (PT) domain. The region spanning 1644-1718 (VYLDEKIRGC…HLVGWFAEKV (75 aa)) is the Carrier domain. S1678 is subject to O-(pantetheine 4'-phosphoryl)serine.

The protein resides in the cytoplasm. Its subcellular location is the cytosol. The catalysed reaction is 3 malonyl-CoA + acetyl-CoA + NADPH + 3 H(+) = 6-methylsalicylate + 3 CO2 + NADP(+) + 4 CoA + H2O. It functions in the pathway mycotoxin biosynthesis; patulin biosynthesis. Its function is as follows. 6-methylsalicylic acid synthase; part of the gene cluster that mediates the biosynthesis of patulin, an acetate-derived tetraketide mycotoxin produced by several fungal species that shows antimicrobial properties against several bacteria. PatK catalyzes the first step of the pathway which is the synthesis of 6-methylsalicylic acid via condensation of 1 acetate and 3 malonate units. The pathway begins with the synthesis of 6-methylsalicylic acid by the polyketide synthase (PKS) patK via condensation of acetate and malonate units. The 6-methylsalicylic acid decarboxylase patG then catalyzes the decarboxylation of 6-methylsalicylic acid to yield m-cresol (also known as 3-methylphenol). These first reactions occur in the cytosol. The intermediate m-cresol is then transported into the endoplasmic reticulum where the cytochrome P450 monooxygenase patH converts it to m-hydroxybenzyl alcohol, which is further converted to gentisyl alcohol by the cytochrome P450 monooxygenase patI. The oxidoreductases patJ and patO further convert gentisyl alcohol to isoepoxydon in the vacuole. PatN catalyzes then the transformation of isoepoxydon into phyllostine. The cluster protein patF is responsible for the conversion from phyllostine to neopatulin whereas the alcohol dehydrogenase patD converts neopatulin to E-ascladiol. The steps between isoepoxydon and E-ascladiol occur in the cytosol, and E-ascladiol is probably secreted to the extracellular space by one of the cluster-specific transporters patC or patM. Finally, the secreted patulin synthase patE catalyzes the conversion of E-ascladiol to patulin. In Aspergillus clavatus (strain ATCC 1007 / CBS 513.65 / DSM 816 / NCTC 3887 / NRRL 1 / QM 1276 / 107), this protein is 6-methylcalicylic acide synthase.